The following is a 241-amino-acid chain: Lactate utilization protein C (241 aa).

This sequence belongs to the LutC/YkgG family.

Is involved in L-lactate degradation and allows cells to grow with lactate as the sole carbon source. The chain is Lactate utilization protein C from Bacillus velezensis (strain DSM 23117 / BGSC 10A6 / LMG 26770 / FZB42) (Bacillus amyloliquefaciens subsp. plantarum).